The following is a 133-amino-acid chain: MRMSLAQRVLLTWLFTLLFLIMLVLKLDEKAPWNWFLIFIPVWIFDTILLVMLIVKMAGRCKSGFDPRHGSHNIKKKAWYLIAMLLKLAFCLALCAKLEQFTTMNLSYVFIPLWALLAGALTELGYNVFFVRD.

Helical transmembrane passes span 5–25 (LAQR…MLVL), 35–55 (WFLI…MLIV), 78–98 (AWYL…CAKL), and 110–130 (FIPL…NVFF).

Its subcellular location is the membrane. The sequence is that of Transmembrane protein 60 (Tmem60) from Mus musculus (Mouse).